A 405-amino-acid chain; its full sequence is 4-hydroxy-3-methylbut-2-enyl diphosphate reductase (405 aa).

A [4Fe-4S] cluster-binding site is contributed by Cys-66. His-96 is a binding site for (2E)-4-hydroxy-3-methylbut-2-enyl diphosphate. Residue His-96 coordinates dimethylallyl diphosphate. His-96 lines the isopentenyl diphosphate pocket. Position 157 (Cys-157) interacts with [4Fe-4S] cluster. His-185 is a binding site for (2E)-4-hydroxy-3-methylbut-2-enyl diphosphate. Position 185 (His-185) interacts with dimethylallyl diphosphate. His-185 provides a ligand contact to isopentenyl diphosphate. Glu-187 acts as the Proton donor in catalysis. Thr-250 provides a ligand contact to (2E)-4-hydroxy-3-methylbut-2-enyl diphosphate. Position 288 (Cys-288) interacts with [4Fe-4S] cluster. (2E)-4-hydroxy-3-methylbut-2-enyl diphosphate-binding residues include Ser-317, Ser-318, Asn-319, and Ser-380. Residues Ser-317, Ser-318, Asn-319, and Ser-380 each contribute to the dimethylallyl diphosphate site. Isopentenyl diphosphate contacts are provided by Ser-317, Ser-318, Asn-319, and Ser-380.

It belongs to the IspH family. [4Fe-4S] cluster is required as a cofactor.

The enzyme catalyses isopentenyl diphosphate + 2 oxidized [2Fe-2S]-[ferredoxin] + H2O = (2E)-4-hydroxy-3-methylbut-2-enyl diphosphate + 2 reduced [2Fe-2S]-[ferredoxin] + 2 H(+). It catalyses the reaction dimethylallyl diphosphate + 2 oxidized [2Fe-2S]-[ferredoxin] + H2O = (2E)-4-hydroxy-3-methylbut-2-enyl diphosphate + 2 reduced [2Fe-2S]-[ferredoxin] + 2 H(+). Its pathway is isoprenoid biosynthesis; dimethylallyl diphosphate biosynthesis; dimethylallyl diphosphate from (2E)-4-hydroxy-3-methylbutenyl diphosphate: step 1/1. It participates in isoprenoid biosynthesis; isopentenyl diphosphate biosynthesis via DXP pathway; isopentenyl diphosphate from 1-deoxy-D-xylulose 5-phosphate: step 6/6. Functionally, catalyzes the conversion of 1-hydroxy-2-methyl-2-(E)-butenyl 4-diphosphate (HMBPP) into a mixture of isopentenyl diphosphate (IPP) and dimethylallyl diphosphate (DMAPP). Acts in the terminal step of the DOXP/MEP pathway for isoprenoid precursor biosynthesis. The polypeptide is 4-hydroxy-3-methylbut-2-enyl diphosphate reductase (Prochlorococcus marinus (strain SARG / CCMP1375 / SS120)).